A 427-amino-acid polypeptide reads, in one-letter code: MSLCLRLLCSVCGAAALRVPLGVSSLRALSGSAEGFRPARVAVVAKTTRYEFEQQRYRSSGLSEAELRDLLALKGSSYNGLLQRYNIHSENVEHIVQSLRKEGTDVRLVKRRDYDEETVRWADAIISAGGDGTMLLAASKVQDRFKPVIGVNTDPERSEGHLCLPVRYTWSFPEALQKLYRGEFRWQWRQRIRLYLEGTGINLTPVDLHEQQLSLEQHNKAHNSQLEQKSVAVSGPQLLPVRALNEVFIGESLSSRVNYKSCKPRFTFSLHRASYYEISVDDGPWEKQKSSGLNVCTGTGSKAWSYNINKMSSQSVEELLNIVRQHKSLNVSLDSDVIQRVTNAYNDSLVYNPEEPKMFFSVREPIANRVFSSSQQRGFTSKVCVRSRCWDACMVVDGGTSFEFNDGAIVSIVMDDQDALCTVLLDD.

The N-terminal 33 residues, M1–A33, are a transit peptide targeting the mitochondrion.

It belongs to the NAD kinase family. Homodimer.

It localises to the mitochondrion. It carries out the reaction NAD(+) + ATP = ADP + NADP(+) + H(+). Mitochondrial NAD(+) kinase that phosphorylates NAD(+) to yield NADP(+). Can use both ATP or inorganic polyphosphate as the phosphoryl donor. This Xenopus tropicalis (Western clawed frog) protein is NAD kinase 2, mitochondrial (nadk2).